The primary structure comprises 228 residues: Sensory transduction protein RegX3 (228 aa).

Residues 3 to 116 (SVLIVEDEES…ELIARIRAVL (114 aa)) form the Response regulatory domain. At Asp52 the chain carries 4-aspartylphosphate. A DNA-binding region (ompR/PhoB-type) is located at residues 129-228 (DGVLEAGPVR…VRGLGYKLEG (100 aa)).

In terms of processing, phosphorylated by SenX3.

Member of the two-component regulatory system SenX3/RegX3 involved in stress response. The system is involved in phosphate starvation response. Once phosphorylated by SenX3, activates the expression of the alkaline phosphatase phoA, the high-affinity phosphate transporter pstSCAB, phnDCE, phnF and senX3. May act as a negative regulator of NhaA. Acts by binding to a DNA motif consisting of an inverted repeat. The polypeptide is Sensory transduction protein RegX3 (Mycolicibacterium smegmatis (strain ATCC 700084 / mc(2)155) (Mycobacterium smegmatis)).